The sequence spans 433 residues: ATP-sensitive inward rectifier potassium channel 12 (433 aa).

Residues 1 to 77 (MTAASRANPY…LADMFTTCVD (77 aa)) are Cytoplasmic-facing. Position 75 is an S-nitrosocysteine (C75). The helical transmembrane segment at 78 to 104 (IRWRYMLLIFSLAFLASWLLFGIIFWV) threads the bilayer. A 1,2-diacyl-sn-glycero-3-phospho-(1D-myo-inositol-4,5-bisphosphate) contacts are provided by R79 and R81. Residues 105–129 (IAVAHGDLEPAEGRGRTPCVMQVHG) are Extracellular-facing. An intrachain disulfide couples C123 to C155. An intramembrane region (helical; Pore-forming) is located at residues 130–146 (FMAAFLFSIETQTTIGY). K(+)-binding residues include T143, I144, G145, and Y146. The short motif at 143 to 148 (TIGYGL) is the Selectivity filter element. Residues 147–155 (GLRCVTEEC) lie on the Extracellular side of the membrane. A helical membrane pass occupies residues 156–183 (PVAVFMVVAQSIVGCIIDSFMIGAIMAK). A 1,2-diacyl-sn-glycero-3-phospho-(1D-myo-inositol-4,5-bisphosphate)-binding residues include K183 and K188. The Cytoplasmic segment spans residues 184-433 (MARPKKRAQT…QRPYRRESEI (250 aa)). Residues 387–433 (DEEDEADGDQDGRSRDGLSPQARHDFDRLQAGGGVLEQRPYRRESEI) form a disordered region. Positions 396–414 (QDGRSRDGLSPQARHDFDR) are enriched in basic and acidic residues. Residues 431–433 (SEI) carry the PDZ-binding motif.

Belongs to the inward rectifier-type potassium channel (TC 1.A.2.1) family. KCNJ12 subfamily. In terms of assembly, homotetramer. Forms heteromer with KCNJ4. Can form heteromeric channels with Kir2.6/KCNJ18. Association, via its PDZ-recognition domain, with LIN7A, LIN7B, LIN7C, DLG1, CASK and APBA1 plays a key role in its localization and trafficking.

Its subcellular location is the membrane. It localises to the cell membrane. It is found in the sarcolemma. The protein localises to the T-tubule. It catalyses the reaction K(+)(in) = K(+)(out). Activated by phosphatidylinositol 4,5-biphosphate (PtdIns(4,5)P2). PtdIns(4,5)P2 binding to the cytoplasmic side of the channel triggers a conformation change leading to channel opening. Inhibited by Ba(2+). Its function is as follows. Inward rectifying potassium channel that probably participates in controlling the resting membrane potential in electrically excitable cells. Probably participates in establishing action potential waveform and excitability of neuronal and muscle tissues. Inward rectifier potassium channels are characterized by a greater tendency to allow potassium to flow into the cell rather than out of it. Their voltage dependence is regulated by the concentration of extracellular potassium; as external potassium is raised, the voltage range of the channel opening shifts to more positive voltages. The inward rectification is mainly due to the blockage of outward current by internal magnesium. The sequence is that of ATP-sensitive inward rectifier potassium channel 12 (KCNJ12) from Homo sapiens (Human).